Consider the following 354-residue polypeptide: Virulence plasmid protein pGP2-D (354 aa).

The sequence is that of Virulence plasmid protein pGP2-D from Chlamydia trachomatis serovar L2 (strain ATCC VR-902B / DSM 19102 / 434/Bu).